The chain runs to 1307 residues: MTRPRGPAPRDGAAWRRDPARRVLLRDAVRGREGGLRLACAVMAGLIVSGGVACAQDSHMAVAGAPATAVAPPGQPAPMPPATVADAAHLAHAAAVLELLLDQGYYWLGQHNLGKAHETIQRALSIEPDNNEALFLQGRLQMAEGGTTQATRTLERLERQGAPAGLVAQLKAQIQAGPVDPRALAEARALAASGRMMPAMFKYKALFRNGDPPPDLALEYYRVLGATILGYQEARTRLAAWVARNPRDIDARLCLDRILTYRVTSRAEGLDGLRALARSNVSAQIRSDAVAAWRDALLWEPITGQSIPLYDEWLAQHPDDTEFTIRLKKAQETQAGVDAANDRQQGYALLSRHMLDAAAREFHRAVDIDPHDPDALGGLGLVAQARQQPALARQYFLQAMQAGPDAAGHWRAALKALETGGGGVDPLVARIVQAINAGRYDAARADLATLGRRPGYGLTVLSLQAALARRQGDTADAVRLYREVVRRAPRDAGALFSLGALDVQVGDATEAADILTRLQRLAPAMARRLEAMMLSAQADRAGDDDGRIALLRRAQALDPDDPWVRLKLAHALDDAGDHAAAQAMMDALTAPRNASAQALQAGIIYAMGRHDTATAGALLERMPRTGRTPDMDRLASLVVLDQRIAALNHAPVAGNAAVLALADQPDPTGERGMRIAAALLARHAPQDARQALARGESLTQPPTPARMLAYAGTYLRLRSAFDTTRCLDAFDAMAKARPADVTADQARARQQVAIGLAIMTADGFDRYGRTAQAAQVLAPVLRAHPDSVEAHLAMGRVYQTRNMATRALEEDETALRLKPANIYALAAAARDAGGAHHLAQAKGYATRLAHEDPDGPMSWEVRSDIERIEGNSRGQLADVEHARHAQCTLDGEGECGGHESFVSDYRWPLIDSEYMDLHGATLPASYHYIPEDDGAQAMDRQIVYLRDSVSPQFDANTFVRSRTGVAGLGQLTEFAVPITATLPFESWDHRLSFSVTPTLLFTGDPLTNAVSAHQFGTVAVNGARPWGYHHYYTQGVGLSLNYVNRWFAADVGSSPLGFPITNVVGGLEFAPRLTRNLGLRISGGRRMVTDSELSYAGERDPGTGKLWGGVTRLFGHGALEWSARGWNAYAGGGFAYLGGTNVIGNTETEAGAGGSATVWQDHDRQWLRVGLDLMYFGYKRNAYFFTWGQGGYFSPRQYFGAMVPVEWSGHNRRWTWFLRGEAGYQYYHSNAAPYFPTSAQLQGQADGSPPSYYGDSGASGLAGNMRGRLVYQLDHRLRIGLEGGYSRAGSWSETSGMWMAHYTLDGQ.

A signal peptide spans 1–55; that stretch reads MTRPRGPAPRDGAAWRRDPARRVLLRDAVRGREGGLRLACAVMAGLIVSGGVACA. TPR repeat units follow at residues 97-130, 270-303, 339-372, 374-406, 458-491, 493-525, 528-561, 754-787, and 788-821; these read LELL…EPDN, LDGL…EPIT, AAND…DPHD, DALG…GPDA, LTVL…APRD, GALF…APAM, RLEA…DPDD, IGLA…HPDS, and VEAH…KPAN.

This sequence belongs to the AcsC/BcsC family.

The protein localises to the cell outer membrane. Its pathway is glycan metabolism; bacterial cellulose biosynthesis. Required for maximal bacterial cellulose synthesis. The protein is Cellulose synthase 2 operon protein C (bcsCII) of Komagataeibacter xylinus (Gluconacetobacter xylinus).